Here is a 413-residue protein sequence, read N- to C-terminus: ATP-dependent (S)-NAD(P)H-hydrate dehydratase (413 aa).

The region spanning 98 to 402 (NLNHFLSYVP…KSVPNALVWG (305 aa)) is the YjeF C-terminal domain. Residues glycine 199 and 252–258 (NFVEYRA) contribute to the (6S)-NADPHX site. Residues 292–296 (KGQED) and 311–320 (GMPRRCGGQG) each bind ATP. Aspartate 321 lines the (6S)-NADPHX pocket.

This sequence belongs to the NnrD/CARKD family. Mg(2+) serves as cofactor.

It carries out the reaction (6S)-NADHX + ATP = ADP + phosphate + NADH + H(+). It catalyses the reaction (6S)-NADPHX + ATP = ADP + phosphate + NADPH + H(+). Catalyzes the dehydration of the S-form of NAD(P)HX at the expense of ATP, which is converted to ADP. Together with NAD(P)HX epimerase, which catalyzes the epimerization of the S- and R-forms, the enzyme allows the repair of both epimers of NAD(P)HX, a damaged form of NAD(P)H that is a result of enzymatic or heat-dependent hydration. In Heterostelium pallidum (strain ATCC 26659 / Pp 5 / PN500) (Cellular slime mold), this protein is ATP-dependent (S)-NAD(P)H-hydrate dehydratase.